Consider the following 64-residue polypeptide: Large ribosomal subunit protein bL35 (64 aa).

The disordered stretch occupies residues 1-43 (MPKMKSKKSLAKRVIAKKNGTLKRGKAYRSHRATGKTTKQKRH).

The protein belongs to the bacterial ribosomal protein bL35 family.

This chain is Large ribosomal subunit protein bL35, found in Mesoplasma florum (strain ATCC 33453 / NBRC 100688 / NCTC 11704 / L1) (Acholeplasma florum).